The primary structure comprises 285 residues: (3S)-malyl-CoA thioesterase (285 aa).

Substrate-binding residues include R70 and E122. Residues E122 and D148 each contribute to the Mg(2+) site.

It belongs to the HpcH/HpaI aldolase family. In terms of assembly, homodimer or homotrimer. The cofactor is Mg(2+).

The catalysed reaction is (S)-malyl-CoA + H2O = (S)-malate + CoA + H(+). Functionally, catalyzes the hydrolysis of (3S)-malyl-CoA to (3S)-malate and free CoA. Inactive towards beta-methylmalyl-CoA and other CoA esters. The chain is (3S)-malyl-CoA thioesterase from Cereibacter sphaeroides (strain ATCC 17025 / ATH 2.4.3) (Rhodobacter sphaeroides).